The following is a 92-amino-acid chain: Elongation factor 1-beta (92 aa).

This sequence belongs to the EF-1-beta/EF-1-delta family.

Its function is as follows. Promotes the exchange of GDP for GTP in EF-1-alpha/GDP, thus allowing the regeneration of EF-1-alpha/GTP that could then be used to form the ternary complex EF-1-alpha/GTP/AAtRNA. The polypeptide is Elongation factor 1-beta (Korarchaeum cryptofilum (strain OPF8)).